Here is a 199-residue protein sequence, read N- to C-terminus: Cytochrome b (199 aa).

4 consecutive transmembrane segments (helical) span residues 1–8 (LTGLFLAM), 32–53 (WLIR…YFHI), 68–88 (WNIG…GYVL), and 133–153 (FFAF…LHLL). 2 residues coordinate heme b: His38 and His52. His137 and His151 together coordinate heme b. A ubiquinone is bound at residue His156. Residues 181 to 199 (YKDLLGFAILLVALASLAH) traverse the membrane as a helical segment.

Belongs to the cytochrome b family. In terms of assembly, the cytochrome bc1 complex contains 3 respiratory subunits (MT-CYB, CYC1 and UQCRFS1), 2 core proteins (UQCRC1 and UQCRC2) and probably 6 low-molecular weight proteins. The cofactor is heme b.

The protein localises to the mitochondrion inner membrane. Component of the ubiquinol-cytochrome c reductase complex (complex III or cytochrome b-c1 complex) that is part of the mitochondrial respiratory chain. The b-c1 complex mediates electron transfer from ubiquinol to cytochrome c. Contributes to the generation of a proton gradient across the mitochondrial membrane that is then used for ATP synthesis. This is Cytochrome b (mt-cyb) from Sarda chiliensis (Pacific bonito).